The primary structure comprises 427 residues: Serine--tRNA ligase (427 aa).

Residue 231 to 233 participates in L-serine binding; the sequence is TAE. 262 to 264 provides a ligand contact to ATP; sequence RSE. Glu-285 lines the L-serine pocket. Residue 349-352 coordinates ATP; that stretch reads EISS. Ser-385 serves as a coordination point for L-serine.

It belongs to the class-II aminoacyl-tRNA synthetase family. Type-1 seryl-tRNA synthetase subfamily. As to quaternary structure, homodimer. The tRNA molecule binds across the dimer.

The protein resides in the cytoplasm. The enzyme catalyses tRNA(Ser) + L-serine + ATP = L-seryl-tRNA(Ser) + AMP + diphosphate + H(+). The catalysed reaction is tRNA(Sec) + L-serine + ATP = L-seryl-tRNA(Sec) + AMP + diphosphate + H(+). Its pathway is aminoacyl-tRNA biosynthesis; selenocysteinyl-tRNA(Sec) biosynthesis; L-seryl-tRNA(Sec) from L-serine and tRNA(Sec): step 1/1. Catalyzes the attachment of serine to tRNA(Ser). Is also able to aminoacylate tRNA(Sec) with serine, to form the misacylated tRNA L-seryl-tRNA(Sec), which will be further converted into selenocysteinyl-tRNA(Sec). The polypeptide is Serine--tRNA ligase (Listeria innocua serovar 6a (strain ATCC BAA-680 / CLIP 11262)).